The following is a 157-amino-acid chain: Rieske domain-containing protein (157 aa).

Residue Met-1 is modified to N-acetylmethionine. Ser-6 is subject to Phosphoserine. 2 consecutive Rieske domains span residues 16–94 (SSVC…TGEG) and 17–131 (SVCV…NIYV). [2Fe-2S] cluster contacts are provided by Cys-57, His-59, Cys-80, and His-83.

It depends on [2Fe-2S] cluster as a cofactor.

This chain is Rieske domain-containing protein (RFESD), found in Homo sapiens (Human).